The primary structure comprises 156 residues: MNVIEGGVAAPNAKIAIVISRFNSFINESLLSGAIDTLKRFGQVSEENITVVRCPGAVELPLVAQRVAKTAKYDAIVSLGSVIRGGTPHFEYVCSECNKGLAQVSLEYSIPVAFGVLTVDTIDQAIERAGTKAGNKGAEAALSALEMINVLSQIES.

Residues F22, 57–59, and 81–83 each bind 5-amino-6-(D-ribitylamino)uracil; these read AVE and SVI. 86–87 lines the (2S)-2-hydroxy-3-oxobutyl phosphate pocket; the sequence is GT. H89 functions as the Proton donor in the catalytic mechanism. F114 is a binding site for 5-amino-6-(D-ribitylamino)uracil. (2S)-2-hydroxy-3-oxobutyl phosphate is bound at residue R128.

It belongs to the DMRL synthase family. As to quaternary structure, forms an icosahedral capsid composed of 60 subunits, arranged as a dodecamer of pentamers.

It carries out the reaction (2S)-2-hydroxy-3-oxobutyl phosphate + 5-amino-6-(D-ribitylamino)uracil = 6,7-dimethyl-8-(1-D-ribityl)lumazine + phosphate + 2 H2O + H(+). The protein operates within cofactor biosynthesis; riboflavin biosynthesis; riboflavin from 2-hydroxy-3-oxobutyl phosphate and 5-amino-6-(D-ribitylamino)uracil: step 1/2. Its function is as follows. Catalyzes the formation of 6,7-dimethyl-8-ribityllumazine by condensation of 5-amino-6-(D-ribitylamino)uracil with 3,4-dihydroxy-2-butanone 4-phosphate. This is the penultimate step in the biosynthesis of riboflavin. The protein is 6,7-dimethyl-8-ribityllumazine synthase of Aliivibrio salmonicida (strain LFI1238) (Vibrio salmonicida (strain LFI1238)).